Consider the following 65-residue polypeptide: Photosystem II reaction center protein J (65 aa).

The helical transmembrane segment at 35 to 55 (LWLVATAGGIAVIFVLGIFFY) threads the bilayer.

Belongs to the PsbJ family. PSII is composed of 1 copy each of membrane proteins PsbA, PsbB, PsbC, PsbD, PsbE, PsbF, PsbH, PsbI, PsbJ, PsbK, PsbL, PsbM, PsbT, PsbX, PsbY, Psb30/Ycf12, peripheral proteins PsbO, CyanoQ (PsbQ), PsbU, PsbV and a large number of cofactors. It forms dimeric complexes.

It localises to the cellular thylakoid membrane. In terms of biological role, one of the components of the core complex of photosystem II (PSII). PSII is a light-driven water:plastoquinone oxidoreductase that uses light energy to abstract electrons from H(2)O, generating O(2) and a proton gradient subsequently used for ATP formation. It consists of a core antenna complex that captures photons, and an electron transfer chain that converts photonic excitation into a charge separation. The polypeptide is Photosystem II reaction center protein J (Prochlorococcus marinus (strain MIT 9312)).